The primary structure comprises 957 residues: Calsyntenin-3 (957 aa).

A signal peptide spans 1 to 19 (MTPLLFPLLLASLLPSSSC). At 20–848 (NKANKHKPWI…SHRNSMVPSA (829 aa)) the chain is on the extracellular side. Cadherin domains lie at 29-145 (IEAE…APVF) and 146-246 (VERL…KPSW). N-linked (GlcNAc...) asparagine glycans are attached at residues Asn-299, Asn-347, and Asn-508. Residues 849-869 (ATLIIVVCVGFLVLMVVLGLV) traverse the membrane as a helical segment. Residues 870–957 (RIHSLHRRVS…RIIETPPHRY (88 aa)) are Cytoplasmic-facing. A disordered region spans residues 919-957 (CVAGAAGGQQDDEDSSDSEAADSPSSDERRIIETPPHRY). Positions 928 to 938 (QDDEDSSDSEA) are enriched in acidic residues. The segment covering 944 to 957 (SDERRIIETPPHRY) has biased composition (basic and acidic residues).

The protein belongs to the calsyntenin family. In terms of assembly, interacts (via cadherin domains) with both alpha and beta isoforms of neurexins (NRXN1, NRXN2 and NRXN3). Directly interacts with APBA2. Forms a tripartite complex with APBA2 and APP. Interacts with low affinity with KLC1. Interacts with SLC23A2/SVCT2. Post-translationally, proteolytically processed under normal cellular conditions. A primary zeta-cleavage generates a large extracellular (soluble) N-terminal domain (sAlc) and a short C-terminal transmembrane fragment (CTF1). A secondary cleavage catalyzed by gamma-secretase within the transmembrane domain releases the beta-Alc-beta chain in the extracellular milieu and produces an intracellular fragment (AlcICD). This processing is strongly suppressed in the tripartite complex formed with APBA2 and APP, which seems to prevent the association with gamma-secretase.

The protein localises to the postsynaptic cell membrane. It is found in the endoplasmic reticulum membrane. It localises to the golgi apparatus membrane. Its subcellular location is the cell projection. The protein resides in the dendrite. Postsynaptic adhesion molecule that binds to presynaptic neurexins to mediate both excitatory and inhibitory synapse formation. Promotes synapse development by acting as a cell adhesion molecule at the postsynaptic membrane, which associates with both neurexin-alpha and neurexin-beta proteins at the presynaptic membrane. Regulates the balance between excitatory and inhibitory synapses by inhibiting formation of excitatory parallel-fiber synapses and promoting formation of inhibitory synapses in the same neuron. May also be involved in ascorbate (vitamin C) uptake via its interaction with SLC23A2/SVCT2. Complex formation with APBA2 and APP, stabilizes APP metabolism and enhances APBA2-mediated suppression of beta-APP40 secretion, due to the retardation of intracellular APP maturation. The protein is Calsyntenin-3 (CLSTN3) of Bos taurus (Bovine).